A 364-amino-acid polypeptide reads, in one-letter code: Dihydroorotate dehydrogenase (quinone) (364 aa).

FMN contacts are provided by residues 78–82 (AGFDK) and Thr-102. Lys-82 provides a ligand contact to substrate. 127–131 (NRMGF) is a binding site for substrate. Residues Asn-156 and Asn-189 each coordinate FMN. Position 189 (Asn-189) interacts with substrate. Ser-192 serves as the catalytic Nucleophile. Substrate is bound at residue Asn-194. The FMN site is built by Lys-227 and Thr-255. A substrate-binding site is contributed by 256 to 257 (NT). FMN-binding positions include Gly-285, Gly-314, and 335–336 (YT).

It belongs to the dihydroorotate dehydrogenase family. Type 2 subfamily. In terms of assembly, monomer. FMN is required as a cofactor.

Its subcellular location is the cell membrane. The enzyme catalyses (S)-dihydroorotate + a quinone = orotate + a quinol. The protein operates within pyrimidine metabolism; UMP biosynthesis via de novo pathway; orotate from (S)-dihydroorotate (quinone route): step 1/1. In terms of biological role, catalyzes the conversion of dihydroorotate to orotate with quinone as electron acceptor. This is Dihydroorotate dehydrogenase (quinone) from Thermosynechococcus vestitus (strain NIES-2133 / IAM M-273 / BP-1).